Consider the following 79-residue polypeptide: MLLLIKLGFIGLAIETLIVIVVWAIVYRIYREVKVEEKISQLRQRIRDRAEDSGNESDGDAEELANLLPPDRIDQDNWV.

Residues 1–7 (MLLLIKL) are Extracellular-facing. Residues 8–28 (GFIGLAIETLIVIVVWAIVYR) traverse the membrane as a helical segment. The Cytoplasmic portion of the chain corresponds to 29-79 (IYREVKVEEKISQLRQRIRDRAEDSGNESDGDAEELANLLPPDRIDQDNWV). The tract at residues 48–79 (DRAEDSGNESDGDAEELANLLPPDRIDQDNWV) is disordered. 2 positions are modified to phosphoserine; by host CK2: Ser-53 and Ser-57. Over residues 53–63 (SGNESDGDAEE) the composition is skewed to acidic residues.

This sequence belongs to the HIV-1 VPU protein family. In terms of assembly, homopentamer. Interacts with host CD4 and BRTC; these interactions induce proteasomal degradation of CD4. Interacts with host BST2; this interaction leads to the degradation of host BST2. Interacts with host FBXW11. Interacts with host AP1M1; this interaction plays a role in the mistrafficking and subsequent degradation of host BST2. Interacts with host RANBP2; this interaction allows Vpu to down-regulate host BLM sumoylation. In terms of processing, phosphorylated by host CK2. This phosphorylation is necessary for interaction with human BTRC and degradation of CD4.

It is found in the host membrane. Ion channel activity is inhibited by hexamethylene amiloride in vitro. Enhances virion budding by targeting host CD4 and Tetherin/BST2 to proteasome degradation. Degradation of CD4 prevents any unwanted premature interactions between viral Env and its host receptor CD4 in the endoplasmic reticulum. Degradation of antiretroviral protein Tetherin/BST2 is important for virion budding, as BST2 tethers new viral particles to the host cell membrane. Mechanistically, Vpu bridges either CD4 or BST2 to BTRC, a substrate recognition subunit of the Skp1/Cullin/F-box protein E3 ubiquitin ligase, induces their ubiquitination and subsequent proteasomal degradation. The alteration of the E3 ligase specificity by Vpu seems to promote the degradation of host IKBKB, leading to NF-kappa-B down-regulation and subsequent apoptosis. Acts as a viroporin that forms an oligomeric ion channel in membranes. Modulates the host DNA repair mechanisms to promote degradation of nuclear viral cDNA in cells that are already productively infected in order to suppress immune sensing and proviral hyper-integration (superinfection). Manipulates PML-NBs and modulates SUMOylation of host BLM protein thereby enhancing its DNA-end processing activity toward viral unintegrated linear DNA. Also inhibits RAD52-mediated homologous repair of viral cDNA, preventing the generation of dead-end circular forms of single copies of the long terminal repeat and permitting sustained nucleolytic attack. This Pan troglodytes (Chimpanzee) protein is Protein Vpu.